We begin with the raw amino-acid sequence, 265 residues long: Small ribosomal subunit protein uS5 (265 aa).

Positions 1–25 (MADTTTAAQADQKPTRAFGAGRPQR) are enriched in low complexity. Residues 1-49 (MADTTTAAQADQKPTRAFGAGRPQRGAGGAPQRGGPRPQRGGQGETKSW) are disordered. Residue Ala-2 is modified to N-acetylalanine. One can recognise an S5 DRBM domain in the interval 89–152 (LKDEVMKIVP…VAAKLSVIPV (64 aa)).

This sequence belongs to the universal ribosomal protein uS5 family.

In terms of biological role, component of the ribosome, a large ribonucleoprotein complex responsible for the synthesis of proteins in the cell. The small ribosomal subunit (SSU) binds messenger RNAs (mRNAs) and translates the encoded message by selecting cognate aminoacyl-transfer RNA (tRNA) molecules. The large subunit (LSU) contains the ribosomal catalytic site termed the peptidyl transferase center (PTC), which catalyzes the formation of peptide bonds, thereby polymerizing the amino acids delivered by tRNAs into a polypeptide chain. The nascent polypeptides leave the ribosome through a tunnel in the LSU and interact with protein factors that function in enzymatic processing, targeting, and the membrane insertion of nascent chains at the exit of the ribosomal tunnel. Plays a role in the assembly and function of the 40S ribosomal subunit. Mutations in this protein affects the control of translational fidelity. Involved in nucleolar processing of pre-18S ribosomal RNA and ribosome assembly. The protein is Small ribosomal subunit protein uS5 (rps2) of Dictyostelium discoideum (Social amoeba).